Reading from the N-terminus, the 100-residue chain is Large ribosomal subunit protein bL21 (100 aa).

This sequence belongs to the bacterial ribosomal protein bL21 family. Part of the 50S ribosomal subunit. Contacts protein L20.

In terms of biological role, this protein binds to 23S rRNA in the presence of protein L20. The chain is Large ribosomal subunit protein bL21 from Corynebacterium jeikeium (strain K411).